Consider the following 301-residue polypeptide: Acetyl-coenzyme A carboxylase carboxyl transferase subunit beta (301 aa).

Positions 29–298 constitute a CoA carboxyltransferase N-terminal domain; the sequence is LWVKCPETGQ…AEPAEEEAEP (270 aa).

This sequence belongs to the AccD/PCCB family. In terms of assembly, acetyl-CoA carboxylase is a heterohexamer composed of biotin carboxyl carrier protein (AccB), biotin carboxylase (AccC) and two subunits each of ACCase subunit alpha (AccA) and ACCase subunit beta (AccD).

The protein resides in the cytoplasm. It catalyses the reaction N(6)-carboxybiotinyl-L-lysyl-[protein] + acetyl-CoA = N(6)-biotinyl-L-lysyl-[protein] + malonyl-CoA. It functions in the pathway lipid metabolism; malonyl-CoA biosynthesis; malonyl-CoA from acetyl-CoA: step 1/1. Functionally, component of the acetyl coenzyme A carboxylase (ACC) complex. Biotin carboxylase (BC) catalyzes the carboxylation of biotin on its carrier protein (BCCP) and then the CO(2) group is transferred by the transcarboxylase to acetyl-CoA to form malonyl-CoA. In Methylobacterium nodulans (strain LMG 21967 / CNCM I-2342 / ORS 2060), this protein is Acetyl-coenzyme A carboxylase carboxyl transferase subunit beta.